The sequence spans 415 residues: Branched-chain-amino-acid aminotransferase 5, chloroplastic (415 aa).

The N-terminal 65 residues, M1–R65, are a transit peptide targeting the chloroplast. K261 carries the post-translational modification N6-(pyridoxal phosphate)lysine.

The protein belongs to the class-IV pyridoxal-phosphate-dependent aminotransferase family. Pyridoxal 5'-phosphate is required as a cofactor.

The protein resides in the plastid. The protein localises to the chloroplast. It carries out the reaction L-leucine + 2-oxoglutarate = 4-methyl-2-oxopentanoate + L-glutamate. The catalysed reaction is L-isoleucine + 2-oxoglutarate = (S)-3-methyl-2-oxopentanoate + L-glutamate. It catalyses the reaction L-valine + 2-oxoglutarate = 3-methyl-2-oxobutanoate + L-glutamate. Its pathway is amino-acid biosynthesis; L-isoleucine biosynthesis; L-isoleucine from 2-oxobutanoate: step 4/4. It participates in amino-acid biosynthesis; L-leucine biosynthesis; L-leucine from 3-methyl-2-oxobutanoate: step 4/4. The protein operates within amino-acid biosynthesis; L-valine biosynthesis; L-valine from pyruvate: step 4/4. Converts 2-oxo acids to branched-chain amino acids. Acts on leucine, isoleucine and valine. The chain is Branched-chain-amino-acid aminotransferase 5, chloroplastic (BCAT5) from Arabidopsis thaliana (Mouse-ear cress).